Consider the following 132-residue polypeptide: Agouti-signaling protein (132 aa).

The first 22 residues, 1-22 (MDVTRLLLATLLVFLCFFTANS), serve as a signal peptide directing secretion. An N-linked (GlcNAc...) asparagine glycan is attached at asparagine 39. Residues 62-85 (IGRKAAEKKRSSKKEASMKKVVRP) form a disordered region. Positions 65–79 (KAAEKKRSSKKEASM) are enriched in basic and acidic residues. Intrachain disulfides connect cysteine 93–cysteine 108, cysteine 100–cysteine 114, cysteine 107–cysteine 125, cysteine 111–cysteine 132, and cysteine 116–cysteine 123. An Agouti domain is found at 93-132 (CVATRNSCKPPAPACCDPCASCQCRFFRSACSCRVLSLNC).

In terms of tissue distribution, widely expressed at low levels. Highly expressed in the skin. Expressed in adipose tissue.

Its subcellular location is the secreted. Functionally, involved in the regulation of melanogenesis. The binding of ASP to MC1R precludes alpha-MSH initiated signaling and thus blocks production of cAMP, leading to a down-regulation of eumelanogenesis (brown/black pigment) and thus increasing synthesis of pheomelanin (yellow/red pigment). In higher primates, agouti may affect the quality of hair pigmentation rather than its pattern of deposition. Could well play a role in neuroendocrine aspects of melanocortin action. May have some functional role in regulating the lipid metabolism with adipocytes. This is Agouti-signaling protein (ASIP) from Homo sapiens (Human).